The following is a 141-amino-acid chain: ATP synthase epsilon chain (141 aa).

This sequence belongs to the ATPase epsilon chain family. F-type ATPases have 2 components, CF(1) - the catalytic core - and CF(0) - the membrane proton channel. CF(1) has five subunits: alpha(3), beta(3), gamma(1), delta(1), epsilon(1). CF(0) has three main subunits: a, b and c.

It localises to the cell membrane. Functionally, produces ATP from ADP in the presence of a proton gradient across the membrane. This is ATP synthase epsilon chain (atpC) from Mycoplasmopsis pulmonis (strain UAB CTIP) (Mycoplasma pulmonis).